The primary structure comprises 212 residues: MPGPVIEEVNEEALMDAIKEQMKLQKENDVVVEDVKDGDEDDDDVDDDDDEIADGAGENEASKQSRSEKKSRKAMLKLGMKPVTDVSRVTIKRSKNVLFVISKPDVFKSPNSETYVIFGEAKIDDMSSQLQAQAAQRFKMPDVASMIPNTDGSEAATVAQEEEDDEDVDETGVEAKDIDLVMTQAGVSRPKAVKALKESNGDIVSAIMELTT.

Residues 25 to 35 (QKENDVVVEDV) show a composition bias toward basic and acidic residues. The disordered stretch occupies residues 25–74 (QKENDVVVEDVKDGDEDDDDVDDDDDEIADGAGENEASKQSRSEKKSRKA). The span at 36–53 (KDGDEDDDDVDDDDDEIA) shows a compositional bias: acidic residues. The region spanning 65 to 130 (SRSEKKSRKA…AKIDDMSSQL (66 aa)) is the NAC-A/B domain. The UBA domain maps to 173–210 (VEAKDIDLVMTQAGVSRPKAVKALKESNGDIVSAIMEL).

Belongs to the NAC-alpha family.

May promote appropriate targeting of ribosome-nascent polypeptide complexes. The chain is Nascent polypeptide-associated complex subunit alpha-like protein 4 from Arabidopsis thaliana (Mouse-ear cress).